Reading from the N-terminus, the 889-residue chain is Low-affinity potassium transport protein (889 aa).

The Cytoplasmic segment spans residues 1 to 51 (MPTAKRTSSRASLALPFQLRLVHKKSWGHRLRDFISGFLKSCRPIAKYVFP). The chain crosses the membrane as a helical span at residues 52-73 (NFIVVHYIYLITLSIIGSILLY). The Extracellular segment spans residues 74-80 (PCKNTAF). Residues 81–101 (IDVLFLAAGASTQGGLATKST) form a helical membrane-spanning segment. Over 102-109 (NDFNLYQQ) the chain is Cytoplasmic. A helical transmembrane segment spans residues 110–130 (IVVYVITLLSTPILIHGFLAF). Topologically, residues 131-464 (VRLYWFERYF…EYRALRLLCC (334 aa)) are extracellular. Residues 189–244 (REDPRQSASDVPMDSPDTSALSSISPLNVSSSKEESSDTQSSPPNFSSKRQPSDVD) form a disordered region. Residues 207–219 (SALSSISPLNVSS) show a composition bias toward low complexity. Residues Asn-216, Asn-233, and Asn-265 are each glycosylated (N-linked (GlcNAc...) asparagine). Residues 465–487 (ILMVYYIGFNILAFVTIVPWACT) form a helical membrane-spanning segment. The Cytoplasmic portion of the chain corresponds to 488 to 499 (RHHYSEIIRRNG). A helical transmembrane segment spans residues 500–521 (VSPTWWGFFTAMSAFSNLGLSL). Residues 522-524 (TAD) lie on the Extracellular side of the membrane. Residues 525 to 545 (SMVSFDTAPYPLIFMMFFIII) form a helical membrane-spanning segment. At 546-548 (GNT) the chain is on the cytoplasmic side. The chain crosses the membrane as a helical span at residues 549-569 (GFPIMLRFIIWIMFKTSRDLS). Over 570-584 (QFKESLGFLLDHPRR) the chain is Extracellular. The helical transmembrane segment at 585–605 (CFTLLFPSGPTWWLFTTLVVL) threads the bilayer. The Cytoplasmic segment spans residues 606–609 (NATD). The chain crosses the membrane as a helical span at residues 610-630 (WILFIILDFNSAVVRQVAKGY). Topologically, residues 631–657 (RALMGLFQSVCTRTAGFNVVDLSKLHP) are extracellular. The helical transmembrane segment at 658–678 (SIQVSYMLMMYVSVLPLAISI) threads the bilayer. At 679–743 (RRTNVYEEQS…KSFVGAHLRR (65 aa)) the chain is on the cytoplasmic side. Residues 705 to 733 (DDIKETDHDGESEERDTVSTKSKPKKQSP) are disordered. The helical transmembrane segment at 744–764 (QLSFDLWYLFLGLFIICICEG) threads the bilayer. The Extracellular segment spans residues 765–776 (RKIEDVNKPDFN). A helical transmembrane segment spans residues 777–797 (VFAILFEVVSAYGTVGLSLGY). Residues 798 to 889 (PNTNTSLSAQ…KIATKFWGKH (92 aa)) lie on the Cytoplasmic side of the membrane.

Belongs to the TrkH potassium transport family.

The protein localises to the membrane. Its function is as follows. This protein is required for low-affinity potassium transport. This chain is Low-affinity potassium transport protein (TRK2), found in Saccharomyces cerevisiae (strain ATCC 204508 / S288c) (Baker's yeast).